A 395-amino-acid chain; its full sequence is 8-amino-7-oxononanoate synthase (395 aa).

Arginine 24 contacts substrate. A pyridoxal 5'-phosphate-binding site is contributed by 111-112 (GF). Histidine 136 lines the substrate pocket. Pyridoxal 5'-phosphate is bound by residues serine 184, 209 to 212 (DDAH), and 240 to 243 (TLSK). An N6-(pyridoxal phosphate)lysine modification is found at lysine 243. Threonine 357 is a substrate binding site.

Belongs to the class-II pyridoxal-phosphate-dependent aminotransferase family. BioF subfamily. As to quaternary structure, homodimer. The cofactor is pyridoxal 5'-phosphate.

The enzyme catalyses 6-carboxyhexanoyl-[ACP] + L-alanine + H(+) = (8S)-8-amino-7-oxononanoate + holo-[ACP] + CO2. Its pathway is cofactor biosynthesis; biotin biosynthesis. Catalyzes the decarboxylative condensation of pimeloyl-[acyl-carrier protein] and L-alanine to produce 8-amino-7-oxononanoate (AON), [acyl-carrier protein], and carbon dioxide. This chain is 8-amino-7-oxononanoate synthase, found in Alkaliphilus oremlandii (strain OhILAs) (Clostridium oremlandii (strain OhILAs)).